Consider the following 260-residue polypeptide: Zinc import ATP-binding protein ZnuC (260 aa).

The 217-residue stretch at 18–234 (IRLQEVAVTF…PEYQKLFGSH (217 aa)) folds into the ABC transporter domain. 50–57 (GNNGAGKT) is an ATP binding site. Positions 241-260 (VFPHDHHDHSGPALAGGGRG) are disordered.

Belongs to the ABC transporter superfamily. Zinc importer (TC 3.A.1.15.5) family. As to quaternary structure, the complex is composed of two ATP-binding proteins (ZnuC), two transmembrane proteins (ZnuB) and a solute-binding protein (ZnuA).

It localises to the cell inner membrane. It carries out the reaction Zn(2+)(out) + ATP(in) + H2O(in) = Zn(2+)(in) + ADP(in) + phosphate(in) + H(+)(in). Part of the ABC transporter complex ZnuABC involved in zinc import. Responsible for energy coupling to the transport system. The polypeptide is Zinc import ATP-binding protein ZnuC (Halorhodospira halophila (strain DSM 244 / SL1) (Ectothiorhodospira halophila (strain DSM 244 / SL1))).